Consider the following 550-residue polypeptide: Leucine-rich repeat, immunoglobulin-like domain and transmembrane domain-containing protein 2 (550 aa).

An N-terminal signal peptide occupies residues 1 to 19 (MASVFHYFLLVLVFLDTHA). Residues 23 to 54 (FCLPGCTCSEESFGRTLQCTSVSLGKIPGNLS) form the LRRNT domain. An N-linked (GlcNAc...) asparagine glycan is attached at asparagine 52. LRR repeat units lie at residues 80-103 (TLEY…EHLP), 104-125 (ELRE…AFRA), 128-149 (LLRV…ALQF), and 152-173 (SLTY…VFLN). The LRRCT domain occupies 200–252 (NPWVCDCRLRGLVQFVKSITLPVILVNSYLICQGPLSKAGQLFHETELSACMK). The 89-residue stretch at 253–341 (PQISTPSANI…SIGKSNLVIS (89 aa)) folds into the Ig-like domain. An intrachain disulfide couples cysteine 274 to cysteine 327. One can recognise a Fibronectin type-III domain in the interval 361–451 (EGNAYIDLRV…QGQCVAFVTG (91 aa)). Residues 466-486 (VTVVLCVVLLAVPVGAYAWAA) form a helical membrane-spanning segment. A disordered region spans residues 508-550 (SCTPAAPQSKDGSFREHPAVCDDGEGHIDTEGDKEKGGTEDNS). Over residues 519 to 550 (GSFREHPAVCDDGEGHIDTEGDKEKGGTEDNS) the composition is skewed to basic and acidic residues.

In terms of assembly, interacts with LRIT1; may form a heterodimer with LRIT1.

Its subcellular location is the membrane. This chain is Leucine-rich repeat, immunoglobulin-like domain and transmembrane domain-containing protein 2 (LRIT2), found in Homo sapiens (Human).